The following is a 93-amino-acid chain: Small ribosomal subunit protein uS19 (93 aa).

The protein belongs to the universal ribosomal protein uS19 family.

Its function is as follows. Protein S19 forms a complex with S13 that binds strongly to the 16S ribosomal RNA. This chain is Small ribosomal subunit protein uS19, found in Synechococcus sp. (strain JA-3-3Ab) (Cyanobacteria bacterium Yellowstone A-Prime).